Here is a 498-residue protein sequence, read N- to C-terminus: ATP synthase subunit beta, chloroplastic (498 aa).

172 to 179 is a binding site for ATP; the sequence is GGAGVGKT.

Belongs to the ATPase alpha/beta chains family. In terms of assembly, F-type ATPases have 2 components, CF(1) - the catalytic core - and CF(0) - the membrane proton channel. CF(1) has five subunits: alpha(3), beta(3), gamma(1), delta(1), epsilon(1). CF(0) has four main subunits: a(1), b(1), b'(1) and c(9-12).

The protein resides in the plastid. Its subcellular location is the chloroplast thylakoid membrane. The enzyme catalyses ATP + H2O + 4 H(+)(in) = ADP + phosphate + 5 H(+)(out). In terms of biological role, produces ATP from ADP in the presence of a proton gradient across the membrane. The catalytic sites are hosted primarily by the beta subunits. The polypeptide is ATP synthase subunit beta, chloroplastic (Aristolochia macrophylla (Dutchman's pipe vine)).